The chain runs to 231 residues: 2-C-methyl-D-erythritol 4-phosphate cytidylyltransferase (231 aa).

The protein belongs to the IspD/TarI cytidylyltransferase family. IspD subfamily.

It catalyses the reaction 2-C-methyl-D-erythritol 4-phosphate + CTP + H(+) = 4-CDP-2-C-methyl-D-erythritol + diphosphate. Its pathway is isoprenoid biosynthesis; isopentenyl diphosphate biosynthesis via DXP pathway; isopentenyl diphosphate from 1-deoxy-D-xylulose 5-phosphate: step 2/6. Its function is as follows. Catalyzes the formation of 4-diphosphocytidyl-2-C-methyl-D-erythritol from CTP and 2-C-methyl-D-erythritol 4-phosphate (MEP). This chain is 2-C-methyl-D-erythritol 4-phosphate cytidylyltransferase, found in Dictyoglomus thermophilum (strain ATCC 35947 / DSM 3960 / H-6-12).